The primary structure comprises 365 residues: Succinyl-diaminopimelate desuccinylase (365 aa).

H64 contacts Zn(2+). Residue D66 is part of the active site. D95 is a Zn(2+) binding site. The Proton acceptor role is filled by E125. 3 residues coordinate Zn(2+): E126, E154, and H339.

Belongs to the peptidase M20A family. DapE subfamily. In terms of assembly, homodimer. Requires Zn(2+) as cofactor. The cofactor is Co(2+).

It carries out the reaction N-succinyl-(2S,6S)-2,6-diaminopimelate + H2O = (2S,6S)-2,6-diaminopimelate + succinate. It functions in the pathway amino-acid biosynthesis; L-lysine biosynthesis via DAP pathway; LL-2,6-diaminopimelate from (S)-tetrahydrodipicolinate (succinylase route): step 3/3. In terms of biological role, catalyzes the hydrolysis of N-succinyl-L,L-diaminopimelic acid (SDAP), forming succinate and LL-2,6-diaminopimelate (DAP), an intermediate involved in the bacterial biosynthesis of lysine and meso-diaminopimelic acid, an essential component of bacterial cell walls. This is Succinyl-diaminopimelate desuccinylase from Sulfurimonas denitrificans (strain ATCC 33889 / DSM 1251) (Thiomicrospira denitrificans (strain ATCC 33889 / DSM 1251)).